Consider the following 531-residue polypeptide: Importin subunit alpha-3 (531 aa).

In terms of domain architecture, IBB spans 1–58; sequence MSLRPSAKTEVRRNRYKVAVDAEEGRRRREDNLVEIRKNKREENLQKKRFTSSMAFGS. ARM repeat units lie at residues 111-153, 154-198, 199-236, 237-281, 282-321, 322-364, 365-405, and 406-447; these read INEV…TSEN, TNVI…CRDL, VLSY…RGKP, PPAF…DKIQ, AVIE…DDLQ, TQMV…NADQ, IQAV…GGTH, and DQIK…VVGE. A disordered region spans residues 500–524; that stretch reads DNEEEGNDENHAPQSGFQFGSTNVP. Polar residues predominate over residues 511–524; that stretch reads APQSGFQFGSTNVP.

This sequence belongs to the importin alpha family. As to quaternary structure, forms a complex with importin subunit beta-1. Interacts with PRL1. Interacts with A.tumefaciens VirD2 and VirE2.

It is found in the nucleus. Functionally, binds to conventional NLS motifs and mediates nuclear protein import across the nuclear envelope. Acts as a cellular receptor for the nuclear import of the virD2 protein of Agrobacterium, but is not essential for Agrobacterium-mediated root transformation. May be involved in the regulation of pathogen-induced salicylic acid accumulation. The polypeptide is Importin subunit alpha-3 (Arabidopsis thaliana (Mouse-ear cress)).